Consider the following 235-residue polypeptide: 2,3,4,5-tetrahydropyridine-2,6-dicarboxylate N-acetyltransferase (235 aa).

Belongs to the transferase hexapeptide repeat family. DapH subfamily.

It catalyses the reaction (S)-2,3,4,5-tetrahydrodipicolinate + acetyl-CoA + H2O = L-2-acetamido-6-oxoheptanedioate + CoA. Its pathway is amino-acid biosynthesis; L-lysine biosynthesis via DAP pathway; LL-2,6-diaminopimelate from (S)-tetrahydrodipicolinate (acetylase route): step 1/3. In terms of biological role, catalyzes the transfer of an acetyl group from acetyl-CoA to tetrahydrodipicolinate. The polypeptide is 2,3,4,5-tetrahydropyridine-2,6-dicarboxylate N-acetyltransferase (Exiguobacterium sibiricum (strain DSM 17290 / CCUG 55495 / CIP 109462 / JCM 13490 / 255-15)).